A 266-amino-acid polypeptide reads, in one-letter code: uncharacterized protein (266 aa).

Residues 12–28 (ILAAGLAIGCAGGYYAY) form a helical membrane-spanning segment. Positions 40 to 140 (EIYAPFTVNK…RGPFKTTKLD (101 aa)) constitute an FAD-binding FR-type domain.

The protein belongs to the flavoprotein pyridine nucleotide cytochrome reductase family. It depends on FAD as a cofactor.

The protein resides in the mitochondrion outer membrane. This is an uncharacterized protein from Schizosaccharomyces pombe (strain 972 / ATCC 24843) (Fission yeast).